A 230-amino-acid chain; its full sequence is Dephospho-CoA kinase (230 aa).

One can recognise a DPCK domain in the interval 3–225 (IIGLTGGIAT…REGGAICPTP (223 aa)). 11–16 (ATGKST) contacts ATP.

This sequence belongs to the CoaE family.

The protein localises to the cytoplasm. The catalysed reaction is 3'-dephospho-CoA + ATP = ADP + CoA + H(+). The protein operates within cofactor biosynthesis; coenzyme A biosynthesis; CoA from (R)-pantothenate: step 5/5. In terms of biological role, catalyzes the phosphorylation of the 3'-hydroxyl group of dephosphocoenzyme A to form coenzyme A. In Synechococcus sp. (strain JA-3-3Ab) (Cyanobacteria bacterium Yellowstone A-Prime), this protein is Dephospho-CoA kinase.